The primary structure comprises 335 residues: Eukaryotic translation initiation factor 3 subunit I (335 aa).

5 WD repeats span residues Gly8–Thr47, Gly50–Asp91, Cys145–Asn184, Glu189–Thr228, and Gly286–Thr325.

This sequence belongs to the eIF-3 subunit I family. Component of the eukaryotic translation initiation factor 3 (eIF-3) complex.

It localises to the cytoplasm. Component of the eukaryotic translation initiation factor 3 (eIF-3) complex, which is involved in protein synthesis of a specialized repertoire of mRNAs and, together with other initiation factors, stimulates binding of mRNA and methionyl-tRNAi to the 40S ribosome. The eIF-3 complex specifically targets and initiates translation of a subset of mRNAs involved in cell proliferation. The chain is Eukaryotic translation initiation factor 3 subunit I (tif34) from Botryotinia fuckeliana (strain B05.10) (Noble rot fungus).